The chain runs to 396 residues: Period circadian protein (396 aa).

Disordered stretches follow at residues 27-120 (VTAP…APPV), 164-188 (LEYSGPGPGHGHGIKRGGSHSWEGE), 253-273 (GGNGNVGSGNGNNNQPSTNQY), and 333-362 (SPSSTNTNPNRPHKHAHVHNSSEKPSTSQA). The span at 93-114 (GTSGTGNSGDGGGGGGANGTGS) shows a compositional bias: gly residues. Residues 253 to 262 (GGNGNVGSGN) show a composition bias toward gly residues. Low complexity predominate over residues 333-342 (SPSSTNTNPN).

In terms of assembly, forms a heterodimer with timeless (TIM); the complex then translocates into the nucleus. In terms of processing, phosphorylated with a circadian rhythmicity, probably by the double-time protein (dbt). Phosphorylation could be implicated in the stability of per monomer and in the formation of heterodimer per-tim.

It is found in the nucleus. The protein localises to the cytoplasm. It localises to the perinuclear region. Its function is as follows. Essential for biological clock functions. Determines the period length of circadian and ultradian rhythms; an increase in PER dosage leads to shortened circadian rhythms and a decrease leads to lengthened circadian rhythms. Essential for the circadian rhythmicity of locomotor activity, eclosion behavior, and for the rhythmic component of the male courtship song that originates in the thoracic nervous system. The biological cycle depends on the rhythmic formation and nuclear localization of the TIM-PER complex. Light induces the degradation of TIM, which promotes elimination of PER. Nuclear activity of the heterodimer coordinatively regulates PER and TIM transcription through a negative feedback loop. Behaves as a negative element in circadian transcriptional loop. Does not appear to bind DNA, suggesting indirect transcriptional inhibition. This Drosophila pavlovskiana (Fruit fly) protein is Period circadian protein (per).